The primary structure comprises 1074 residues: Chitin synthase 2 (1074 aa).

Disordered stretches follow at residues 1–32, 56–179, and 209–255; these read MSHYHRQGGPGQPHDSYEDQQQPYYTDQAHSG, QAAP…PSQH, and RSDS…PYNN. The segment covering 19 to 29 has biased composition (polar residues); that stretch reads DQQQPYYTDQA. The span at 68–80 shows a compositional bias: low complexity; it reads RIRSNSSGSRSVS. Asparagine 72 and asparagine 97 each carry an N-linked (GlcNAc...) asparagine glycan. Over residues 85 to 119 the composition is skewed to polar residues; it reads AYTNQGIPPVPSNLSAARQRSDPSQALPPSSSSYA. Over residues 129 to 143 the composition is skewed to low complexity; sequence SSHRNAPNAPNSNHP. A glycan (N-linked (GlcNAc...) asparagine) is linked at asparagine 149. An N-linked (GlcNAc...) asparagine glycan is attached at asparagine 289. 8 consecutive transmembrane segments (helical) span residues 608–628, 742–762, 779–799, 817–837, 867–887, 891–911, 1001–1021, and 1048–1068; these read VFGFISVLPGAFSAYRYKALL, LVLLVFSWFGIANFFLAFYFL, GAAIVEIFQNIFIAMVIVVLV, IIIFALIMGLALYAAGYTIYL, IVISLAATYVMWLLCSLLHLE, MLTSFVQYLFLTPTYVIILSM, LVLIWMCTNALVVIIFTSTWW, and IFWSTAGLSAVRFVGSITFLL.

It belongs to the chitin synthase family. Class II subfamily.

Its subcellular location is the cell membrane. The protein resides in the cytoplasmic vesicle membrane. It carries out the reaction [(1-&gt;4)-N-acetyl-beta-D-glucosaminyl](n) + UDP-N-acetyl-alpha-D-glucosamine = [(1-&gt;4)-N-acetyl-beta-D-glucosaminyl](n+1) + UDP + H(+). In terms of biological role, polymerizes chitin, a structural polymer of the cell wall and septum, by transferring the sugar moiety of UDP-GlcNAc to the non-reducing end of the growing chitin polymer. The polypeptide is Chitin synthase 2 (CHS2) (Mycosarcoma maydis (Corn smut fungus)).